The chain runs to 36 residues: Photosystem I reaction center subunit VIII (36 aa).

The chain crosses the membrane as a helical span at residues 6–26; that stretch reads LPSIFVPLVGLVFPAIAMASL.

The protein belongs to the PsaI family.

The protein localises to the plastid. The protein resides in the chloroplast thylakoid membrane. May help in the organization of the PsaL subunit. The chain is Photosystem I reaction center subunit VIII from Drimys granadensis.